A 180-amino-acid chain; its full sequence is Chromosome-anchoring protein RacA (180 aa).

A DNA-binding region (H-T-H motif) is located at residues threonine 5–glutamine 25. Positions histidine 90–glutamate 150 form a coiled coil.

This sequence belongs to the RacA family.

It localises to the cytoplasm. Functionally, required for the formation of axial filaments and for anchoring the origin regions at the cell poles in sporulating cells, thus ensuring proper chromosome segregation in the prespore. Binds in a dispersed manner throughout the chromosome but preferentially to sites clustered in the origin portion of the chromosome, causing condensation of the chromosome and its remodeling into an elongated, anchored structure. The chain is Chromosome-anchoring protein RacA from Bacillus anthracis (strain A0248).